The following is a 358-amino-acid chain: NADH-quinone oxidoreductase subunit H (358 aa).

The next 8 helical transmembrane spans lie at 29–49 (LIKI…LTLW), 95–115 (GLFY…WAVI), 130–150 (LLLV…AGWA), 176–196 (FCFL…IVAV), 206–226 (GLGF…VYLI), 258–280 (GFAI…AVVM), 297–317 (GWIW…WIRA), and 334–354 (IFIP…LSPW).

Belongs to the complex I subunit 1 family. NDH-1 is composed of 14 different subunits. Subunits NuoA, H, J, K, L, M, N constitute the membrane sector of the complex.

It is found in the cell inner membrane. The enzyme catalyses a quinone + NADH + 5 H(+)(in) = a quinol + NAD(+) + 4 H(+)(out). In terms of biological role, NDH-1 shuttles electrons from NADH, via FMN and iron-sulfur (Fe-S) centers, to quinones in the respiratory chain. The immediate electron acceptor for the enzyme in this species is believed to be ubiquinone. Couples the redox reaction to proton translocation (for every two electrons transferred, four hydrogen ions are translocated across the cytoplasmic membrane), and thus conserves the redox energy in a proton gradient. This subunit may bind ubiquinone. The protein is NADH-quinone oxidoreductase subunit H of Acidovorax sp. (strain JS42).